The sequence spans 399 residues: Chorismate synthase (399 aa).

Residues R40 and R46 each coordinate NADP(+). FMN contacts are provided by residues 135 to 137, 256 to 257, G301, 316 to 320, and R342; these read RAS, QA, and KPIAT.

The protein belongs to the chorismate synthase family. As to quaternary structure, homotetramer. Requires FMNH2 as cofactor.

The catalysed reaction is 5-O-(1-carboxyvinyl)-3-phosphoshikimate = chorismate + phosphate. Its pathway is metabolic intermediate biosynthesis; chorismate biosynthesis; chorismate from D-erythrose 4-phosphate and phosphoenolpyruvate: step 7/7. Functionally, catalyzes the anti-1,4-elimination of the C-3 phosphate and the C-6 proR hydrogen from 5-enolpyruvylshikimate-3-phosphate (EPSP) to yield chorismate, which is the branch point compound that serves as the starting substrate for the three terminal pathways of aromatic amino acid biosynthesis. This reaction introduces a second double bond into the aromatic ring system. This is Chorismate synthase from Paenarthrobacter aurescens (strain TC1).